The following is a 189-amino-acid chain: ATP synthase subunit delta (189 aa).

Belongs to the ATPase delta chain family. In terms of assembly, F-type ATPases have 2 components, F(1) - the catalytic core - and F(0) - the membrane proton channel. F(1) has five subunits: alpha(3), beta(3), gamma(1), delta(1), epsilon(1). F(0) has three main subunits: a(1), b(2) and c(10-14). The alpha and beta chains form an alternating ring which encloses part of the gamma chain. F(1) is attached to F(0) by a central stalk formed by the gamma and epsilon chains, while a peripheral stalk is formed by the delta and b chains.

The protein localises to the cell inner membrane. F(1)F(0) ATP synthase produces ATP from ADP in the presence of a proton or sodium gradient. F-type ATPases consist of two structural domains, F(1) containing the extramembraneous catalytic core and F(0) containing the membrane proton channel, linked together by a central stalk and a peripheral stalk. During catalysis, ATP synthesis in the catalytic domain of F(1) is coupled via a rotary mechanism of the central stalk subunits to proton translocation. In terms of biological role, this protein is part of the stalk that links CF(0) to CF(1). It either transmits conformational changes from CF(0) to CF(1) or is implicated in proton conduction. The protein is ATP synthase subunit delta of Methylorubrum extorquens (strain CM4 / NCIMB 13688) (Methylobacterium extorquens).